We begin with the raw amino-acid sequence, 394 residues long: p-hydroxybenzoate hydroxylase (394 aa).

Residues serine 13, glutamate 32, 42 to 47 (RIRAGV), and glutamine 102 each bind FAD. Residues tyrosine 201, 212–214 (SQR), and tyrosine 222 contribute to the substrate site. FAD is bound at residue aspartate 286. Proline 293 contributes to the substrate binding site. 299–300 (LN) serves as a coordination point for FAD.

Belongs to the aromatic-ring hydroxylase family. As to quaternary structure, homodimer. It depends on FAD as a cofactor.

It carries out the reaction 4-hydroxybenzoate + NADPH + O2 + H(+) = 3,4-dihydroxybenzoate + NADP(+) + H2O. Its pathway is aromatic compound metabolism; benzoate degradation via hydroxylation; 3,4-dihydroxybenzoate from benzoate: step 2/2. Its function is as follows. Catalyzes the incorporation of an atom of dioxygen into p-hydroxybenzoate (p-OHB) to form 3,4-dihydroxybenzoate (3,4DOHB). The reaction occurs in two parts: reduction of the flavin adenine dinucleotide (FAD) in the enzyme by reduced nicotinamide adenine dinucleotide phosphate (NADPH) in response to binding p-hydroxybenzoate to the enzyme and oxidation of reduced FAD with oxygen to form a hydroperoxide, which then oxygenates p-hydroxybenzoate. This Pseudomonas aeruginosa (strain ATCC 15692 / DSM 22644 / CIP 104116 / JCM 14847 / LMG 12228 / 1C / PRS 101 / PAO1) protein is p-hydroxybenzoate hydroxylase.